Reading from the N-terminus, the 354-residue chain is UDP-N-acetylglucosamine--N-acetylmuramyl-(pentapeptide) pyrophosphoryl-undecaprenol N-acetylglucosamine transferase (354 aa).

Residues Ser196 and Gln288 each coordinate UDP-N-acetyl-alpha-D-glucosamine.

Belongs to the glycosyltransferase 28 family. MurG subfamily.

Its subcellular location is the cell membrane. The enzyme catalyses Mur2Ac(oyl-L-Ala-gamma-D-Glu-L-Lys-D-Ala-D-Ala)-di-trans,octa-cis-undecaprenyl diphosphate + UDP-N-acetyl-alpha-D-glucosamine = beta-D-GlcNAc-(1-&gt;4)-Mur2Ac(oyl-L-Ala-gamma-D-Glu-L-Lys-D-Ala-D-Ala)-di-trans,octa-cis-undecaprenyl diphosphate + UDP + H(+). It participates in cell wall biogenesis; peptidoglycan biosynthesis. Cell wall formation. Catalyzes the transfer of a GlcNAc subunit on undecaprenyl-pyrophosphoryl-MurNAc-pentapeptide (lipid intermediate I) to form undecaprenyl-pyrophosphoryl-MurNAc-(pentapeptide)GlcNAc (lipid intermediate II). The chain is UDP-N-acetylglucosamine--N-acetylmuramyl-(pentapeptide) pyrophosphoryl-undecaprenol N-acetylglucosamine transferase from Streptococcus suis (strain 98HAH33).